The following is a 389-amino-acid chain: MAALRAGKTNNEADQPSSPVLRFGADKPLKLDAGTLLSPFQIAYQTYGTLNDARSNAILVCHALTGDQHVANTNPVTGKPGWWEVLIGPGRIIDTNRFFVICSNVIGGCLGSTGPASTNPATGKPYGLDLPVITIRDMVRAQQMLIDHFGIEKLFCVLGGSMGGMQVLEWASSYPERVFSALPIATGARHSSQNIAFHEVGRQAVMADPDWHGGKYFENGKRPEKGLAVARMAAHITYLSEAALHRKFGRNLQDREALTFGFDADFQIESYLRHQGMTFVDRFDANSYLYMTRSMDYFDLAADHGGRLADAFAGTKTRFCLVSFTSDWLFPTEESRSIVHALNAAGASVSFVEIETDRGHDAFLLDEPELFAAINGFIGSAARARGLSA.

The segment at 1-21 (MAALRAGKTNNEADQPSSPVL) is disordered. Polar residues predominate over residues 8-18 (KTNNEADQPSS). An AB hydrolase-1 domain is found at 56-366 (NAILVCHALT…DRGHDAFLLD (311 aa)). S161 acts as the Nucleophile in catalysis. Position 231 (R231) interacts with substrate. Residues D327 and H360 contribute to the active site. D361 serves as a coordination point for substrate.

The protein belongs to the AB hydrolase superfamily. MetX family. Homodimer.

The protein localises to the cytoplasm. It carries out the reaction L-homoserine + acetyl-CoA = O-acetyl-L-homoserine + CoA. It participates in amino-acid biosynthesis; L-methionine biosynthesis via de novo pathway; O-acetyl-L-homoserine from L-homoserine: step 1/1. Transfers an acetyl group from acetyl-CoA to L-homoserine, forming acetyl-L-homoserine. This Mesorhizobium japonicum (strain LMG 29417 / CECT 9101 / MAFF 303099) (Mesorhizobium loti (strain MAFF 303099)) protein is Homoserine O-acetyltransferase.